Consider the following 121-residue polypeptide: Group 1 truncated hemoglobin (121 aa).

Residue methionine 1 is modified to N-acetylmethionine. Histidine 73 provides a ligand contact to heme.

This sequence belongs to the truncated hemoglobin family. Group I subfamily. As to quaternary structure, monomer. Requires heme as cofactor.

The polypeptide is Group 1 truncated hemoglobin (Tetrahymena thermophila).